The primary structure comprises 230 residues: Orotidine 5'-phosphate decarboxylase (230 aa).

Residues Asp-11, Lys-34, 61-70 (DLKLHDIPNT), Thr-117, Arg-179, Gln-188, Gly-208, and Arg-209 contribute to the substrate site. Lys-63 serves as the catalytic Proton donor.

It belongs to the OMP decarboxylase family. Type 1 subfamily. As to quaternary structure, homodimer.

It catalyses the reaction orotidine 5'-phosphate + H(+) = UMP + CO2. It participates in pyrimidine metabolism; UMP biosynthesis via de novo pathway; UMP from orotate: step 2/2. Catalyzes the decarboxylation of orotidine 5'-monophosphate (OMP) to uridine 5'-monophosphate (UMP). In Streptococcus sanguinis (strain SK36), this protein is Orotidine 5'-phosphate decarboxylase.